Here is a 223-residue protein sequence, read N- to C-terminus: Probable tRNA-splicing endonuclease subunit tsp-1 (223 aa).

The interval 1–55 (MESGSTPPTDKQIRENEQDGTGHQGKLLARPTSTRQQQQQQQQQPSHSVSQSVSQ) is disordered. Low complexity predominate over residues 30 to 55 (RPTSTRQQQQQQQQQPSHSVSQSVSQ).

It belongs to the SEN15 family. In terms of assembly, tRNA splicing endonuclease is a heterotetramer composed of tsp-2/sen2, tsp-1/sen15, tsp-4/sen34 and tsp-5/sen54. Interacts directly with tsp-4/sen34.

Non-catalytic subunit of the tRNA-splicing endonuclease complex, a complex responsible for identification and cleavage of the splice sites in pre-tRNA. It cleaves pre-tRNA at the 5' and 3' splice sites to release the intron. The products are an intron and two tRNA half-molecules bearing 2',3' cyclic phosphate and 5'-OH termini. There are no conserved sequences at the splice sites, but the intron is invariably located at the same site in the gene, placing the splice sites an invariant distance from the constant structural features of the tRNA body. The polypeptide is Probable tRNA-splicing endonuclease subunit tsp-1 (tsp-1) (Neurospora crassa (strain ATCC 24698 / 74-OR23-1A / CBS 708.71 / DSM 1257 / FGSC 987)).